Here is a 156-residue protein sequence, read N- to C-terminus: Small ribosomal subunit protein uS7 (156 aa).

It belongs to the universal ribosomal protein uS7 family. As to quaternary structure, part of the 30S ribosomal subunit. Contacts proteins S9 and S11.

In terms of biological role, one of the primary rRNA binding proteins, it binds directly to 16S rRNA where it nucleates assembly of the head domain of the 30S subunit. Is located at the subunit interface close to the decoding center, probably blocks exit of the E-site tRNA. The sequence is that of Small ribosomal subunit protein uS7 from Shewanella loihica (strain ATCC BAA-1088 / PV-4).